The primary structure comprises 542 residues: Organic anion transporter 3 (542 aa).

Residues 1 to 20 (MTFSEILDRVGSMGRFQFLH) lie on the Cytoplasmic side of the membrane. At Ser4 the chain carries Phosphoserine. A helical transmembrane segment spans residues 21 to 41 (VAILGLPILNMANHNLLQIFT). The Extracellular segment spans residues 42–123 (AATPVHHCRP…LVCNSNKLKE (82 aa)). N-linked (GlcNAc...) asparagine glycosylation is present at Asn86. A helical transmembrane segment spans residues 124 to 144 (MAQSIFMAGILIGGLVLGDLS). Residues 145 to 154 (DRFGRRPILT) lie on the Cytoplasmic side of the membrane. A helical membrane pass occupies residues 155–175 (CSYLLLAASGSGAAFSPTFPI). Residue Tyr176 is a topological domain, extracellular. Residues 177-197 (MVFRFLCGFGISGITLSTVIL) form a helical membrane-spanning segment. Topologically, residues 198-212 (NVEWVPTRMRAIMST) are cytoplasmic. Residues 213-233 (ALGYCYTFGQFILPGLAYAIP) traverse the membrane as a helical segment. Residues 234–236 (QWR) lie on the Extracellular side of the membrane. The chain crosses the membrane as a helical span at residues 237–257 (WLQLTVSIPFFIFFLSSWWTP). Residues 258–327 (ESIRWLVLSG…FRIPMLRRMT (70 aa)) lie on the Cytoplasmic side of the membrane. The helical transmembrane segment at 328–348 (FCLSLAWFATGFAYYSLAMGV) threads the bilayer. Residues 349–354 (EEFGVN) are Extracellular-facing. The helical transmembrane segment at 355–375 (LYILQIIFGGVDVPAKFITIL) threads the bilayer. The Cytoplasmic segment spans residues 376 to 386 (SLSYLGRHTTQ). The chain crosses the membrane as a helical span at residues 387 to 407 (AAALLLAGGAILALTFVPLDL). The Extracellular segment spans residues 408 to 471 (QTVRTVLAVF…LVKITGEVQP (64 aa)). Residues 472 to 492 (FIPNIIYGITALLGGSAAFFL) traverse the membrane as a helical segment. At 493–542 (PETLNQPLPETIEDLENWSLRAKKPKQEPEVEKASQRIPLQPHGPGLGSS) the chain is on the cytoplasmic side. The disordered stretch occupies residues 515–542 (KKPKQEPEVEKASQRIPLQPHGPGLGSS). Residues 517–527 (PKQEPEVEKAS) are compositionally biased toward basic and acidic residues.

This sequence belongs to the major facilitator (TC 2.A.1) superfamily. Organic cation transporter (TC 2.A.1.19) family.

Its subcellular location is the basolateral cell membrane. The enzyme catalyses estrone 3-sulfate(out) + glutarate(in) = estrone 3-sulfate(in) + glutarate(out). It catalyses the reaction estrone 3-sulfate(in) + 2-oxoglutarate(out) = estrone 3-sulfate(out) + 2-oxoglutarate(in). The catalysed reaction is glutarate(in) + 2-oxoglutarate(out) = glutarate(out) + 2-oxoglutarate(in). It carries out the reaction urate(in) + 2-oxoglutarate(out) = urate(out) + 2-oxoglutarate(in). The enzyme catalyses taurocholate(out) + glutarate(in) = taurocholate(in) + glutarate(out). It catalyses the reaction dehydroepiandrosterone 3-sulfate(out) + glutarate(in) = dehydroepiandrosterone 3-sulfate(in) + glutarate(out). The catalysed reaction is prostaglandin F2alpha(out) + glutarate(in) = prostaglandin F2alpha(in) + glutarate(out). It carries out the reaction prostaglandin F2alpha(out) + 2-oxoglutarate(in) = prostaglandin F2alpha(in) + 2-oxoglutarate(out). The enzyme catalyses (R)-carnitine(out) + 2-oxoglutarate(in) = (R)-carnitine(in) + 2-oxoglutarate(out). It catalyses the reaction glutarate(in) + (R)-carnitine(out) = glutarate(out) + (R)-carnitine(in). The catalysed reaction is prostaglandin E2(out) + 2-oxoglutarate(in) = prostaglandin E2(in) + 2-oxoglutarate(out). It carries out the reaction prostaglandin E2(out) + glutarate(in) = prostaglandin E2(in) + glutarate(out). The enzyme catalyses urate(in) + glutarate(out) = urate(out) + glutarate(in). It catalyses the reaction taurocholate(out) + 2-oxoglutarate(in) = taurocholate(in) + 2-oxoglutarate(out). The catalysed reaction is dehydroepiandrosterone 3-sulfate(out) + 2-oxoglutarate(in) = dehydroepiandrosterone 3-sulfate(in) + 2-oxoglutarate(out). It carries out the reaction kynurenate(out) + a dicarboxylate(in) = kynurenate(in) + a dicarboxylate(out). The enzyme catalyses (indol-3-yl)acetate(out) + a dicarboxylate(in) = (indol-3-yl)acetate(in) + a dicarboxylate(out). It catalyses the reaction indoxyl sulfate(out) + a dicarboxylate(in) = indoxyl sulfate(in) + a dicarboxylate(out). The catalysed reaction is N-benzoylglycine(out) + a dicarboxylate(in) = N-benzoylglycine(in) + a dicarboxylate(out). It carries out the reaction 3-carboxy-4-methyl-5-propyl-2-furanpropanoate(out) + a dicarboxylate(in) = 3-carboxy-4-methyl-5-propyl-2-furanpropanoate(in) + a dicarboxylate(out). The enzyme catalyses (6R)-L-erythro-5,6,7,8-tetrahydrobiopterin(out) + a dicarboxylate(in) = (6R)-L-erythro-5,6,7,8-tetrahydrobiopterin(in) + a dicarboxylate(out). It catalyses the reaction L-erythro-7,8-dihydrobiopterin(out) + a dicarboxylate(in) = L-erythro-7,8-dihydrobiopterin(in) + a dicarboxylate(out). The catalysed reaction is L-sepiapterin(out) + a dicarboxylate(in) = L-sepiapterin(in) + a dicarboxylate(out). Its function is as follows. Functions as an organic anion/dicarboxylate exchanger that couples organic anion uptake indirectly to the sodium gradient. Transports organic anions such as estrone 3-sulfate (E1S) and urate in exchange for dicarboxylates such as glutarate or ketoglutarate (2-oxoglutarate). Plays an important role in the excretion of endogenous and exogenous organic anions, especially from the kidney and the brain. E1S transport is pH- and chloride-dependent and may also involve E1S/cGMP exchange. Responsible for the transport of prostaglandin E2 (PGE2) and prostaglandin F2(alpha) (PGF2(alpha)) in the basolateral side of the renal tubule. Involved in the transport of neuroactive tryptophan metabolites kynurenate and xanthurenate. Functions as a biopterin transporters involved in the uptake and the secretion of coenzymes tetrahydrobiopterin (BH4), dihydrobiopterin (BH2) and sepiapterin to urine, thereby determining baseline levels of blood biopterins. May be involved in the basolateral transport of steviol, a metabolite of the popular sugar substitute stevioside. May participate in the detoxification/ renal excretion of drugs and xenobiotics, such as the histamine H(2)-receptor antagonists fexofenadine and cimetidine, the antibiotic benzylpenicillin (PCG), the anionic herbicide 2,4-dichloro-phenoxyacetate (2,4-D), the diagnostic agent p-aminohippurate (PAH), the antiviral acyclovir (ACV), and the mycotoxin ochratoxin (OTA), by transporting these exogenous organic anions across the cell membrane in exchange for dicarboxylates such as 2-oxoglutarate. Contributes to the renal uptake of potent uremic toxins (indoxyl sulfate (IS), indole acetate (IA), hippurate/N-benzoylglycine (HA) and 3-carboxy-4-methyl-5-propyl-2-furanpropionate (CMPF)), pravastatin, PCG, E1S and dehydroepiandrosterone sulfate (DHEAS), and is partly involved in the renal uptake of temocaprilat (an angiotensin-converting enzyme (ACE) inhibitor). May contribute to the release of cortisol in the adrenals. Involved in one of the detoxification systems on the choroid plexus (CP), removes substrates such as E1S or taurocholate (TC), PCG, 2,4-D and PAH, from the cerebrospinal fluid (CSF) to the blood for eventual excretion in urine and bile. Also contributes to the uptake of several other organic compounds such as the prostanoids prostaglandin E(2) and prostaglandin F(2-alpha), L-carnitine, and the therapeutic drugs allopurinol, 6-mercaptopurine (6-MP) and 5-fluorouracil (5-FU). Mediates the transport of PAH, PCG, and the statins pravastatin and pitavastatin, from the cerebrum into the blood circulation across the blood-brain barrier (BBB). In summary, plays a role in the efflux of drugs and xenobiotics, helping reduce their undesired toxicological effects on the body. The polypeptide is Organic anion transporter 3 (SLC22A8) (Pongo abelii (Sumatran orangutan)).